A 53-amino-acid chain; its full sequence is Chlorophyll a-b binding protein 1, chloroplastic (53 aa).

Phe18 lines the chlorophyll b pocket. Chlorophyll a contacts are provided by Glu48 and His51. Residue Arg53 participates in chlorophyll b binding.

Belongs to the light-harvesting chlorophyll a/b-binding (LHC) protein family. The LHC complex consists of chlorophyll a-b binding proteins. It depends on Binds at least 14 chlorophylls (8 Chl-a and 6 Chl-b) and carotenoids such as lutein and neoxanthin. as a cofactor. In terms of processing, photoregulated by reversible phosphorylation of its threonine residues.

Its subcellular location is the plastid. It is found in the chloroplast thylakoid membrane. Functionally, the light-harvesting complex (LHC) functions as a light receptor, it captures and delivers excitation energy to photosystems with which it is closely associated. This is Chlorophyll a-b binding protein 1, chloroplastic from Populus euphratica (Euphrates poplar).